A 248-amino-acid polypeptide reads, in one-letter code: 2,3-bisphosphoglycerate-dependent phosphoglycerate mutase (248 aa).

Residues Arg8–Asn15, Thr21–Gly22, Arg60, Glu87–Tyr90, Lys98, and Arg114–Arg115 contribute to the substrate site. Catalysis depends on His9, which acts as the Tele-phosphohistidine intermediate. The active-site Proton donor/acceptor is the Glu87. The tract at residues Tyr117–Arg137 is disordered. Basic and acidic residues predominate over residues Thr127–Arg137. A substrate-binding site is contributed by Gly183–Asn184.

It belongs to the phosphoglycerate mutase family. BPG-dependent PGAM subfamily. Homodimer.

It catalyses the reaction (2R)-2-phosphoglycerate = (2R)-3-phosphoglycerate. It participates in carbohydrate degradation; glycolysis; pyruvate from D-glyceraldehyde 3-phosphate: step 3/5. Functionally, catalyzes the interconversion of 2-phosphoglycerate and 3-phosphoglycerate. The polypeptide is 2,3-bisphosphoglycerate-dependent phosphoglycerate mutase (Cupriavidus taiwanensis (strain DSM 17343 / BCRC 17206 / CCUG 44338 / CIP 107171 / LMG 19424 / R1) (Ralstonia taiwanensis (strain LMG 19424))).